Reading from the N-terminus, the 599-residue chain is MHIMEGFLPSPWWQFWALLAVVCVLAGMAALIRLVKRNPESLPLLGLAGACVFILSSLKLPSVGSSSHATGTGFGAILFGPAVCSVFCTIVLVFQALLLAHGGITTLGANIISMGVAGPLAACIIFKIGHLIRPEFSIRSFSVTVFCAAAAADLVTYMMTSLQLALAYPAAEGGVLASFVVYLGIFSITQVPLAVLEGILIVLMMRFVIRIRPDIFVSLDILSKKETRILLPSSDQNLSPISKNKWIIAGIIVVLLTASLAFLLAGLGLQSGSDDLVAETLIDLGNLPVFDPLNLVSEDMHGWLFALQAGIGAAVLVFCLYLLRIRSASRGFGKKPHTIFDEHILDDVAIASPLRQVSAWLKLLFCLSAIIIGVTSPLPYLPLFIAGVMIFAALIIAKVSPRLYGSLLTIPLVFAGTGAAVILLITGGGETLIDFFRIGAFHFQITTTSLELAALVLSRTLAGMCSLYFLTLTTPITSLFSVLQKMRMPQAFIDLSMLIYRYIFVFIGEAIAIHNAQIMRGGYGTWKNYLTSFSMLASMLFIRTWEKGEAIFVSMDSRCYDGCMALPEEEGHVTPLSAMAVFLFIALIFGLLCAEMLLL.

The interval M1–S239 is cbiM. 16 helical membrane passes run W12 to I32, L44 to G64, F74 to F94, T106 to F126, S140 to T160, L162 to Y182, L183 to L203, I247 to L267, W303 to L323, Q356 to S376, P377 to A397, L407 to G427, I438 to S458, G463 to L483, I493 to I513, and M579 to L599. The tract at residues D341–L599 is cbiQ.

In the N-terminal section; belongs to the CbiM family. The protein in the C-terminal section; belongs to the CbiQ family. Forms an energy-coupling factor (ECF) transporter complex composed of an ATP-binding protein (A component, CbiO), a transmembrane protein (T component, CbiQ) and 2 possible substrate-capture proteins (S components, CbiM and CbiN) of unknown stoichimetry.

The protein localises to the cell membrane. The protein operates within cofactor biosynthesis; adenosylcobalamin biosynthesis. Part of the energy-coupling factor (ECF) transporter complex CbiMNOQ involved in cobalt import. In Methanocorpusculum labreanum (strain ATCC 43576 / DSM 4855 / Z), this protein is Putative fused cobalt transport protein CbiMQ (cbiMQ).